We begin with the raw amino-acid sequence, 908 residues long: Zinc finger and BTB domain-containing protein 41 (908 aa).

Residues 38 to 59 (TQAPERPTPEAAQRCQELPPSP) form a disordered region. Positions 89–153 (CDLLIIVEGK…LYTSEFFVYK (65 aa)) constitute a BTB domain. The C2H2-type 1 zinc finger occupies 208 to 231 (HQCKFCSRHFCYKKSLENHLAKTH). The segment covering 252–261 (RRSKRNRKCP) has biased composition (basic residues). A disordered region spans residues 252–344 (RRSKRNRKCP…EAGDSAGSIH (93 aa)). The segment covering 267 to 276 (TSDDEQESGD) has biased composition (acidic residues). Basic and acidic residues predominate over residues 279 to 296 (DNLHQESSEKERSDRNDS). Over residues 297-336 (EDPGSEYNAEDEELEEEVSDEDSDTEQSDKDNDAEEEPEA) the composition is skewed to acidic residues. C2H2-type zinc fingers lie at residues 360 to 382 (LQCPKCDKTFDRIGKYESHTRVH), 388 to 410 (FECDICHQRYSTKSNLTVHRKKH), 421 to 444 (HKCPYCNKLHASKKTLAKHVKRFH), 462 to 484 (WKCDICKKSFTRRPHLEEHMILH), 490 to 513 (FKCTYCEEHFKSRFARLKHQEKFH), 517 to 540 (FPCDICGRQFNDTGNLKRHIECTH), 546 to 568 (WTCFICGKSVRERTTLKEHLRIH), 574 to 596 (HLCSICGQSFRHGSSYRLHLRVH), 602 to 624 (YECDECGKTFIRHDHLTKHKKIH), 630 to 653 (HQCEECGKCFGRRDHLTVHYKSVH), 667 to 689 (HQCDVCKKIFKGKSSLEMHFRTH), 695 to 717 (YKCQICNQSFRIKKTLTKHLVIH), and 723 to 746 (FNCQHCNATFKRKDKLKYHIDHVH).

It is found in the nucleus. In terms of biological role, may be involved in transcriptional regulation. The chain is Zinc finger and BTB domain-containing protein 41 (Zbtb41) from Mus musculus (Mouse).